The primary structure comprises 526 residues: ESX-1 secretion-associated protein EspB (526 aa).

Basic and acidic residues predominate over residues 1 to 23 (MSEELKYELPGLERKAHECESTR). Disordered regions lie at residues 1–35 (MSEELKYELPGLERKAHECESTRPEGPGDATKPDE), 91–110 (RQMNGSDAPPPAAEAVVPDM), and 271–526 (QIQE…GKQQ). A compositionally biased stretch (gly residues) spans 303-328 (GGPGGPGSGSGGGSGGGASGGSGGGT). The segment covering 335–362 (PSTDPSMSPMSTNSAGEEQSSGSPSSGG) has biased composition (low complexity). Over residues 363 to 387 (SSSGGSPSGGSPSGGGAPSSGGMPE) the composition is skewed to gly residues. The segment covering 393–405 (DMPGGPDIPGLDD) has biased composition (low complexity). The span at 413–429 (AGGGGGGGVGGGGGGGM) shows a compositional bias: gly residues. Positions 430–440 (PAAPLGPAVGA) are enriched in low complexity. A compositionally biased stretch (gly residues) spans 451-484 (RGGGVGVPTGTGGGAGGMMGGGMGGMGAGHGQGQ). A compositionally biased stretch (basic and acidic residues) spans 485–508 (GKEKKRDPKLAPDEDLYTEDRAHS).

The protein belongs to the EspB family.

The protein resides in the secreted. Functionally, involved in DNA conjugation, at least in the recipient strain. This Mycolicibacterium smegmatis (strain MKD8) (Mycobacterium smegmatis) protein is ESX-1 secretion-associated protein EspB.